A 436-amino-acid chain; its full sequence is Hydrogenobyrinate a,c-diamide synthase (436 aa).

The GATase cobBQ-type domain maps to 244–435 (RIAVARDDAF…MHVIDFSGEA (192 aa)). Cys327 serves as the catalytic Nucleophile.

This sequence belongs to the CobB/CbiA family. Mg(2+) serves as cofactor.

It catalyses the reaction hydrogenobyrinate + 2 L-glutamine + 2 ATP + 2 H2O = hydrogenobyrinate a,c-diamide + 2 L-glutamate + 2 ADP + 2 phosphate + 2 H(+). It functions in the pathway cofactor biosynthesis; adenosylcobalamin biosynthesis; cob(II)yrinate a,c-diamide from precorrin-2 (aerobic route): step 9/10. Its function is as follows. Catalyzes the ATP-dependent amidation of the two carboxylate groups at positions a and c of hydrogenobyrinate, using either L-glutamine or ammonia as the nitrogen source. The chain is Hydrogenobyrinate a,c-diamide synthase from Brucella ovis (strain ATCC 25840 / 63/290 / NCTC 10512).